A 187-amino-acid chain; its full sequence is Adenine phosphoribosyltransferase (187 aa).

Residue 133-137 coordinates AMP; the sequence is ATGGS.

Belongs to the purine/pyrimidine phosphoribosyltransferase family. In terms of assembly, homodimer. Mg(2+) serves as cofactor.

The protein resides in the cytoplasm. It is found in the nucleus. The catalysed reaction is AMP + diphosphate = 5-phospho-alpha-D-ribose 1-diphosphate + adenine. Its pathway is purine metabolism; AMP biosynthesis via salvage pathway; AMP from adenine: step 1/1. Its function is as follows. Catalyzes a salvage reaction resulting in the formation of AMP, that is energically less costly than de novo synthesis. The protein is Adenine phosphoribosyltransferase (APT1) of Kluyveromyces lactis (strain ATCC 8585 / CBS 2359 / DSM 70799 / NBRC 1267 / NRRL Y-1140 / WM37) (Yeast).